Reading from the N-terminus, the 253-residue chain is 5-oxoprolinase subunit A (253 aa).

It belongs to the LamB/PxpA family. Forms a complex composed of PxpA, PxpB and PxpC.

It catalyses the reaction 5-oxo-L-proline + ATP + 2 H2O = L-glutamate + ADP + phosphate + H(+). In terms of biological role, catalyzes the cleavage of 5-oxoproline to form L-glutamate coupled to the hydrolysis of ATP to ADP and inorganic phosphate. The sequence is that of 5-oxoprolinase subunit A from Bacillus cereus (strain ZK / E33L).